A 263-amino-acid chain; its full sequence is Endonuclease 8 (263 aa).

Proline 2 (schiff-base intermediate with DNA) is an active-site residue. Glutamate 3 serves as the catalytic Proton donor. Lysine 53 acts as the Proton donor; for beta-elimination activity in catalysis. DNA contacts are provided by glutamine 70, arginine 125, and asparagine 169. The FPG-type zinc finger occupies 229–263 (KVFHRDGEACERCGGIIEKTTLSSRPFYWCPHCQK). Arginine 253 serves as the catalytic Proton donor; for delta-elimination activity.

This sequence belongs to the FPG family. It depends on Zn(2+) as a cofactor.

The enzyme catalyses 2'-deoxyribonucleotide-(2'-deoxyribose 5'-phosphate)-2'-deoxyribonucleotide-DNA = a 3'-end 2'-deoxyribonucleotide-(2,3-dehydro-2,3-deoxyribose 5'-phosphate)-DNA + a 5'-end 5'-phospho-2'-deoxyribonucleoside-DNA + H(+). Involved in base excision repair of DNA damaged by oxidation or by mutagenic agents. Acts as a DNA glycosylase that recognizes and removes damaged bases. Has a preference for oxidized pyrimidines, such as thymine glycol, 5,6-dihydrouracil and 5,6-dihydrothymine. Has AP (apurinic/apyrimidinic) lyase activity and introduces nicks in the DNA strand. Cleaves the DNA backbone by beta-delta elimination to generate a single-strand break at the site of the removed base with both 3'- and 5'-phosphates. The protein is Endonuclease 8 of Salmonella schwarzengrund (strain CVM19633).